The primary structure comprises 64 residues: Long neurotoxin MS4 (64 aa).

Disulfide bonds link Cys3–Cys24, Cys6–Cys11, Cys17–Cys41, Cys45–Cys57, and Cys58–Cys63.

Belongs to the three-finger toxin family. Ancestral subfamily. Expressed by the venom gland.

Its subcellular location is the secreted. Produces peripheral paralysis by blocking neuromuscular transmission at the postsynaptic site. Weak inhibitor of the endogenous nicotinic acetylcholine receptors (nAChR) in the human rhabdomyosarcoma TE 671 cell line with an IC(50) of 690 mM. This neurotoxin is lethal to zebrafish by injection at the back of the dorsolateral region, but is not toxic to mice by intraperitoneal injection. The chain is Long neurotoxin MS4 from Micrurus surinamensis (Surinam coral snake).